The chain runs to 143 residues: Putative mediator of RNA polymerase II transcription subunit 11 (143 aa).

Residues Ile-97–Asp-143 are a coiled coil. Residues Glu-109 to Asp-143 are disordered. The segment covering Asn-111–Gln-136 has biased composition (basic and acidic residues).

This sequence belongs to the Mediator complex subunit 11 family. Component of the Mediator complex.

It localises to the nucleus. Component of the Mediator complex, a coactivator involved in the regulated transcription of nearly all RNA polymerase II-dependent genes. Mediator functions as a bridge to convey information from gene-specific regulatory proteins to the basal RNA polymerase II transcription machinery. Mediator is recruited to promoters by direct interactions with regulatory proteins and serves as a scaffold for the assembly of a functional pre-initiation complex with RNA polymerase II and the general transcription factors. This Dictyostelium discoideum (Social amoeba) protein is Putative mediator of RNA polymerase II transcription subunit 11 (med11).